A 249-amino-acid polypeptide reads, in one-letter code: Coproheme decarboxylase (249 aa).

Residues Arg-131, 145-149, His-172, and Gln-185 each bind Fe-coproporphyrin III; that span reads YPMDK. Tyr-145 is a catalytic residue.

Belongs to the ChdC family. Type 1 subfamily. The cofactor is Fe-coproporphyrin III.

The enzyme catalyses Fe-coproporphyrin III + 2 H2O2 + 2 H(+) = heme b + 2 CO2 + 4 H2O. The catalysed reaction is Fe-coproporphyrin III + H2O2 + H(+) = harderoheme III + CO2 + 2 H2O. It catalyses the reaction harderoheme III + H2O2 + H(+) = heme b + CO2 + 2 H2O. The protein operates within porphyrin-containing compound metabolism; protoheme biosynthesis. Involved in coproporphyrin-dependent heme b biosynthesis. Catalyzes the decarboxylation of Fe-coproporphyrin III (coproheme) to heme b (protoheme IX), the last step of the pathway. The reaction occurs in a stepwise manner with a three-propionate intermediate. This chain is Coproheme decarboxylase, found in Staphylococcus haemolyticus (strain JCSC1435).